Consider the following 423-residue polypeptide: MALASGPARRALAGSGQLGLGGFGAPRRGAYEWGVRSTRKSEPPPLDRVYEIPGLEPITFAGKMHFVPWLARPIFPPWDRGYKDPRFYRSPPLHEHPLYKDQACYIFHHRCRLLEGVKQALWLTKTKLIEGLPEKVLSLVDDPRNHIENQDECVLNVISHARLWQTTEEIPKRETYCPVIVDNLIQLCKSQILKHPSLARRICVQNSTFSATWNRESLLLQVRGSGGARLSTKDPLPTIASREEIEATKNHVLETFYPISPIIDLHECNIYDVKNDTGFQEGYPYPYPHTLYLLDKANLRPHRLQPDQLRAKMILFAFGSALAQARLLYGNDAKVLEQPVVVQSVGTDGRVFHFLVFQLNTTDLDCNEGVKNLAWVDSDQLLYQHFWCLPVIKKRVVVEPVGPVGFKPETFRKFLALYLHGAA.

The N-terminal 29 residues, 1–29 (MALASGPARRALAGSGQLGLGGFGAPRRG), are a transit peptide targeting the mitochondrion.

The protein belongs to the mitochondrion-specific ribosomal protein mL37 family. Component of the mitochondrial large ribosomal subunit (mt-LSU). Mature mammalian 55S mitochondrial ribosomes consist of a small (28S) and a large (39S) subunit. The 28S small subunit contains a 12S ribosomal RNA (12S mt-rRNA) and 30 different proteins. The 39S large subunit contains a 16S rRNA (16S mt-rRNA), a copy of mitochondrial valine transfer RNA (mt-tRNA(Val)), which plays an integral structural role, and 52 different proteins. mL37 forms a heterodimer with mL65.

The protein resides in the mitochondrion. This is Large ribosomal subunit protein mL37 (MRPL37) from Homo sapiens (Human).